The following is an 80-amino-acid chain: Putative membrane protein insertion efficiency factor (80 aa).

The protein belongs to the UPF0161 family.

The protein localises to the cell inner membrane. Its function is as follows. Could be involved in insertion of integral membrane proteins into the membrane. The polypeptide is Putative membrane protein insertion efficiency factor (Kosmotoga olearia (strain ATCC BAA-1733 / DSM 21960 / TBF 19.5.1)).